We begin with the raw amino-acid sequence, 274 residues long: tRNA pseudouridine synthase A (274 aa).

The active-site Nucleophile is aspartate 54. Position 112 (tyrosine 112) interacts with substrate.

Belongs to the tRNA pseudouridine synthase TruA family. In terms of assembly, homodimer.

It catalyses the reaction uridine(38/39/40) in tRNA = pseudouridine(38/39/40) in tRNA. In terms of biological role, formation of pseudouridine at positions 38, 39 and 40 in the anticodon stem and loop of transfer RNAs. The sequence is that of tRNA pseudouridine synthase A from Solidesulfovibrio magneticus (strain ATCC 700980 / DSM 13731 / RS-1) (Desulfovibrio magneticus).